We begin with the raw amino-acid sequence, 175 residues long: Peptide deformylase (175 aa).

2 residues coordinate Fe cation: C96 and H138. The active site involves E139. H142 serves as a coordination point for Fe cation.

The protein belongs to the polypeptide deformylase family. Fe(2+) is required as a cofactor.

The catalysed reaction is N-terminal N-formyl-L-methionyl-[peptide] + H2O = N-terminal L-methionyl-[peptide] + formate. Its function is as follows. Removes the formyl group from the N-terminal Met of newly synthesized proteins. Requires at least a dipeptide for an efficient rate of reaction. N-terminal L-methionine is a prerequisite for activity but the enzyme has broad specificity at other positions. The protein is Peptide deformylase of Rhodopseudomonas palustris (strain BisB18).